The sequence spans 158 residues: NAD(P)H-quinone oxidoreductase subunit J, chloroplastic (158 aa).

The protein belongs to the complex I 30 kDa subunit family. As to quaternary structure, NDH is composed of at least 16 different subunits, 5 of which are encoded in the nucleus.

Its subcellular location is the plastid. The protein resides in the chloroplast thylakoid membrane. It carries out the reaction a plastoquinone + NADH + (n+1) H(+)(in) = a plastoquinol + NAD(+) + n H(+)(out). It catalyses the reaction a plastoquinone + NADPH + (n+1) H(+)(in) = a plastoquinol + NADP(+) + n H(+)(out). Functionally, NDH shuttles electrons from NAD(P)H:plastoquinone, via FMN and iron-sulfur (Fe-S) centers, to quinones in the photosynthetic chain and possibly in a chloroplast respiratory chain. The immediate electron acceptor for the enzyme in this species is believed to be plastoquinone. Couples the redox reaction to proton translocation, and thus conserves the redox energy in a proton gradient. The chain is NAD(P)H-quinone oxidoreductase subunit J, chloroplastic from Nicotiana tabacum (Common tobacco).